The primary structure comprises 271 residues: PA-phosphatase related-family protein DDB_G0284367 (271 aa).

Transmembrane regions (helical) follow at residues 23-43, 68-88, 102-122, 150-170, 181-201, and 211-231; these read FLCL…IPPF, IVPV…VFIG, AALG…ILKV, FPSG…FYLC, GNIL…LVAV, and FSDI…VYFM.

Belongs to the PA-phosphatase related phosphoesterase family.

It is found in the membrane. The sequence is that of PA-phosphatase related-family protein DDB_G0284367 from Dictyostelium discoideum (Social amoeba).